A 372-amino-acid polypeptide reads, in one-letter code: Putative glutamate--cysteine ligase 2 (372 aa).

It belongs to the glutamate--cysteine ligase type 2 family. YbdK subfamily. Homodimer.

The enzyme catalyses L-cysteine + L-glutamate + ATP = gamma-L-glutamyl-L-cysteine + ADP + phosphate + H(+). Functionally, ATP-dependent carboxylate-amine ligase which exhibits weak glutamate--cysteine ligase activity. In Citrobacter koseri (strain ATCC BAA-895 / CDC 4225-83 / SGSC4696), this protein is Putative glutamate--cysteine ligase 2.